The following is a 292-amino-acid chain: Malectin (292 aa).

An N-terminal signal peptide occupies residues 1 to 28 (MLGAWAVEGTAVALLRLLLLLLPPAIRG). The Lumenal portion of the chain corresponds to 29–269 (PGLGVAGVAG…TPNPYASDNS (241 aa)). 5 residues coordinate a carbohydrate: Tyr82, Tyr104, Tyr131, Phe132, and Asp201. Positions 221–265 (LQPHPGLEKKEEEEEEEEYDEGSNLKKQTNKNRVQSGPRTPNPYA) are disordered. Over residues 231–241 (EEEEEEEEYDE) the composition is skewed to acidic residues. The segment covering 245–265 (LKKQTNKNRVQSGPRTPNPYA) has biased composition (polar residues). N-linked (GlcNAc...) asparagine glycosylation occurs at Asn268. Residues 270-290 (SLMFPILVAFGVFIPTLFCLC) form a helical membrane-spanning segment. Topologically, residues 291-292 (RL) are cytoplasmic.

This sequence belongs to the malectin family. Interacts with the oligosaccharyltransferase (OST) complex.

It localises to the endoplasmic reticulum membrane. Its function is as follows. Carbohydrate-binding protein with a strong ligand preference for Glc2-N-glycan. May play a role in the early steps of protein N-glycosylation. The polypeptide is Malectin (Homo sapiens (Human)).